The following is a 520-amino-acid chain: MIPDVSQALSWLEAHPHALKGIRRGIERETLRVTEDGKLATTGHPEKLGAALTHHWITTDFAEALLEFITPVDDNLDHLLTFLRDIHRHVARNLGEERMWPLSMPCFIEAEQDIELAQFGSSNIGRMKTLYREGLKNRYGALMQTISGVHYNFSLPLEFWQAWAGVKDAESGKEQISAGYFRLIRNYYRFGWVIPYLFGASPAICSSFLKGRETALPFERTEQGMCYLPYATSLRLSDLGYTNKSQSNLGITFNDLQSYVEGLKRAIVTPSEEFAKLGVKDGDRHLQLNSNVLQIENELYAPIRPKRVTKSGETPSDALLRGGIEYIEVRSLDINPFSPIGVDAVQARFLDLFLIWCVLADAPEMSSDELLCTRKNWNRVILEGRKPGQTIGIGCDDSREPLAKVGKALFDDLRRVAEVLDSEAGDRQYQQVCDELVAAFDDPELTFSARILKAMKEEGTGRVGLQLAEQYRQMLIEEPLEILTETELAKEQEASWQRQRNVEASDTLSFEEFLKQHGGS.

The protein belongs to the glutamate--cysteine ligase type 1 family. Type 1 subfamily.

The catalysed reaction is L-cysteine + L-glutamate + ATP = gamma-L-glutamyl-L-cysteine + ADP + phosphate + H(+). It participates in sulfur metabolism; glutathione biosynthesis; glutathione from L-cysteine and L-glutamate: step 1/2. The polypeptide is Glutamate--cysteine ligase (Serratia proteamaculans (strain 568)).